We begin with the raw amino-acid sequence, 517 residues long: Crotonobetaine/carnitine--CoA ligase (517 aa).

Belongs to the ATP-dependent AMP-binding enzyme family.

The catalysed reaction is 4-(trimethylamino)butanoate + ATP + CoA = 4-(trimethylamino)butanoyl-CoA + AMP + diphosphate. It catalyses the reaction crotonobetaine + ATP + CoA = crotonobetainyl-CoA + AMP + diphosphate. The enzyme catalyses (R)-carnitine + ATP + CoA = (R)-carnitinyl-CoA + AMP + diphosphate. It participates in amine and polyamine metabolism; carnitine metabolism. Functionally, catalyzes the transfer of CoA to carnitine, generating the initial carnitinyl-CoA needed for the CaiB reaction cycle. Also has activity toward crotonobetaine and gamma-butyrobetaine. This is Crotonobetaine/carnitine--CoA ligase from Salmonella heidelberg (strain SL476).